The sequence spans 287 residues: PPP2R1A-PPP2R2A-interacting phosphatase regulator 1 (287 aa).

The tract at residues 1–44 is disordered; that stretch reads MAQEKMELDLELPPGTGGSPAEGGGSGGGGGLRRSNSAPLIHGL. Over residues 15 to 32 the composition is skewed to gly residues; it reads GTGGSPAEGGGSGGGGGL. S35 is subject to Phosphoserine. S37 is modified (phosphoserine; by CHEK1). Phosphoserine is present on S45. A Phosphothreonine modification is found at T47. S48, S62, and S76 each carry phosphoserine. Residue K89 forms a Glycyl lysine isopeptide (Lys-Gly) (interchain with G-Cter in SUMO1) linkage. Residues S143 and S147 each carry the phosphoserine modification. T149 is subject to Phosphothreonine. Disordered stretches follow at residues 167–189 and 236–287; these read SNGL…RSQS and GVCV…LSSK. Low complexity-rich tracts occupy residues 178-189 and 246-257; these read PTTRFTTRRSQS and GNSSSAGSSCNS. S187 and S189 each carry phosphoserine. The span at 259–270 shows a compositional bias: polar residues; sequence AKVSTTTDSPVS. Phosphoserine occurs at positions 267, 270, and 276.

This sequence belongs to the FAM122 family. As to quaternary structure, interacts with PPP2CA and PPP2R1A. Interacts (via its N-terminus) with PPP2R2A; the interaction is direct and this interaction inhibits PP2A activity. The CHEK1-mediated Ser-37 phosphorylated form interacts with 14-3-3 proteins. CHEK1-mediated phosphorylation at Ser-37 negatively regulates its ability to inhibit serine/threonine-protein phosphatase 2A (PP2A) activity. Phosphorylation leads to its release from the PP2A complex and its sequestration by 14-3-3 proteins in the cytoplasm resulting in its inability to translocate to the nucleus, where it otherwise inhibits PP2A.

Its subcellular location is the nucleus. It localises to the cytoplasm. In terms of biological role, acts as an inhibitor of serine/threonine-protein phosphatase 2A (PP2A) activity. Inhibits PP2A activity by blocking the substrate binding site on PPP2R2A and the active site of PPP2CA. Potentiates ubiquitin-mediated proteasomal degradation of serine/threonine-protein phosphatase 2A catalytic subunit alpha (PPP2CA). Inhibits PP2A-mediated dephosphorylation of WEE1, promoting ubiquitin-mediated proteolysis of WEE1, thereby releasing G2/M checkpoint. The polypeptide is PPP2R1A-PPP2R2A-interacting phosphatase regulator 1 (Homo sapiens (Human)).